Here is a 212-residue protein sequence, read N- to C-terminus: MNSIAVVDYGMGNLRSVSKALEYVDSSAVVTVTSDPETIRSAARVVVPGQGAMPHCMQALDDQGLRESVIEAAKNKPFLGICLGLQMLFEESEEGNIRALGILPGRVKKLESTDTADSDIPKIKIPHMGWNQVHQTLEHPLWHGIDTDTRFYFVHSYYVATDEPQIVAGSTEYPVPFTCAVARDNIFAIQFHPEKSHSAGLALLSNFLKWTP.

The Glutamine amidotransferase type-1 domain maps to 3 to 212; it reads SIAVVDYGMG…LLSNFLKWTP (210 aa). C82 (nucleophile) is an active-site residue. Active-site residues include H192 and E194.

In terms of assembly, heterodimer of HisH and HisF.

Its subcellular location is the cytoplasm. It carries out the reaction 5-[(5-phospho-1-deoxy-D-ribulos-1-ylimino)methylamino]-1-(5-phospho-beta-D-ribosyl)imidazole-4-carboxamide + L-glutamine = D-erythro-1-(imidazol-4-yl)glycerol 3-phosphate + 5-amino-1-(5-phospho-beta-D-ribosyl)imidazole-4-carboxamide + L-glutamate + H(+). It catalyses the reaction L-glutamine + H2O = L-glutamate + NH4(+). It participates in amino-acid biosynthesis; L-histidine biosynthesis; L-histidine from 5-phospho-alpha-D-ribose 1-diphosphate: step 5/9. Functionally, IGPS catalyzes the conversion of PRFAR and glutamine to IGP, AICAR and glutamate. The HisH subunit catalyzes the hydrolysis of glutamine to glutamate and ammonia as part of the synthesis of IGP and AICAR. The resulting ammonia molecule is channeled to the active site of HisF. The protein is Imidazole glycerol phosphate synthase subunit HisH of Nitrosomonas europaea (strain ATCC 19718 / CIP 103999 / KCTC 2705 / NBRC 14298).